The chain runs to 321 residues: DNA repair and recombination protein RadA (321 aa).

An ATP-binding site is contributed by 111 to 118; sequence GEFGSGKT.

Belongs to the eukaryotic RecA-like protein family.

In terms of biological role, involved in DNA repair and in homologous recombination. Binds and assemble on single-stranded DNA to form a nucleoprotein filament. Hydrolyzes ATP in a ssDNA-dependent manner and promotes DNA strand exchange between homologous DNA molecules. The protein is DNA repair and recombination protein RadA of Sulfolobus acidocaldarius (strain ATCC 33909 / DSM 639 / JCM 8929 / NBRC 15157 / NCIMB 11770).